A 245-amino-acid chain; its full sequence is Adenosylcobinamide-GDP ribazoletransferase (245 aa).

A run of 5 helical transmembrane segments spans residues 31–51, 61–81, 113–133, 138–158, and 192–212; these read FGRAVLCYPLVGVLIGVVLYA, PLLQAALLLSLWVALSGALHL, VAVVVLVLVLLLKFSALAALL, AGLLPLAPWLARSSLPLLFLT, and LAFGLAGLLALLVTLMLFAWL.

The protein belongs to the CobS family. Mg(2+) is required as a cofactor.

The protein resides in the cell inner membrane. The enzyme catalyses alpha-ribazole + adenosylcob(III)inamide-GDP = adenosylcob(III)alamin + GMP + H(+). The catalysed reaction is alpha-ribazole 5'-phosphate + adenosylcob(III)inamide-GDP = adenosylcob(III)alamin 5'-phosphate + GMP + H(+). Its pathway is cofactor biosynthesis; adenosylcobalamin biosynthesis; adenosylcobalamin from cob(II)yrinate a,c-diamide: step 7/7. Functionally, joins adenosylcobinamide-GDP and alpha-ribazole to generate adenosylcobalamin (Ado-cobalamin). Also synthesizes adenosylcobalamin 5'-phosphate from adenosylcobinamide-GDP and alpha-ribazole 5'-phosphate. The sequence is that of Adenosylcobinamide-GDP ribazoletransferase from Pseudomonas aeruginosa (strain UCBPP-PA14).